The chain runs to 445 residues: GTPase Obg (445 aa).

The region spanning 7–164 (PEFVDCVTVE…RKLRLEVKSI (158 aa)) is the Obg domain. The OBG-type G domain occupies 165 to 342 (ADVALVGFPS…FTLRLGEICQ (178 aa)). Residues 171–178 (GFPSVGKS), 196–200 (FTTLH), 217–220 (DVPG), 291–294 (NKID), and 323–325 (SAV) each bind GTP. Mg(2+) contacts are provided by serine 178 and threonine 198. The region spanning 357 to 434 (IPAKNTPEFS…IGGVIFTWDP (78 aa)) is the OCT domain.

It belongs to the TRAFAC class OBG-HflX-like GTPase superfamily. OBG GTPase family. In terms of assembly, monomer. Mg(2+) serves as cofactor.

It localises to the cytoplasm. Its function is as follows. An essential GTPase which binds GTP, GDP and possibly (p)ppGpp with moderate affinity, with high nucleotide exchange rates and a fairly low GTP hydrolysis rate. Plays a role in control of the cell cycle, stress response, ribosome biogenesis and in those bacteria that undergo differentiation, in morphogenesis control. The sequence is that of GTPase Obg from Tropheryma whipplei (strain Twist) (Whipple's bacillus).